Consider the following 175-residue polypeptide: Protein-export protein SecB (175 aa).

Residues 154 to 175 (QQGGNNNGSDSGIILPPGTTRQ) form a disordered region.

This sequence belongs to the SecB family. Homotetramer, a dimer of dimers. One homotetramer interacts with 1 SecA dimer.

The protein resides in the cytoplasm. One of the proteins required for the normal export of preproteins out of the cell cytoplasm. It is a molecular chaperone that binds to a subset of precursor proteins, maintaining them in a translocation-competent state. It also specifically binds to its receptor SecA. The polypeptide is Protein-export protein SecB (Bordetella petrii (strain ATCC BAA-461 / DSM 12804 / CCUG 43448)).